The chain runs to 305 residues: tRNA dimethylallyltransferase (305 aa).

8–15 (GPTGTGKS) provides a ligand contact to ATP. 10–15 (TGTGKS) is a substrate binding site.

Belongs to the IPP transferase family. In terms of assembly, monomer. The cofactor is Mg(2+).

It carries out the reaction adenosine(37) in tRNA + dimethylallyl diphosphate = N(6)-dimethylallyladenosine(37) in tRNA + diphosphate. Catalyzes the transfer of a dimethylallyl group onto the adenine at position 37 in tRNAs that read codons beginning with uridine, leading to the formation of N6-(dimethylallyl)adenosine (i(6)A). The protein is tRNA dimethylallyltransferase of Mycobacterium sp. (strain JLS).